We begin with the raw amino-acid sequence, 519 residues long: Carboxyl-terminal-processing peptidase 3, chloroplastic (519 aa).

Residues 186-274 (YQSFRIGSDG…IKLKNVNGSG (89 aa)) enclose the PDZ domain. Active-site charge relay system residues include Ser407 and Lys432.

This sequence belongs to the peptidase S41A family.

The protein localises to the plastid. It is found in the chloroplast thylakoid lumen. The enzyme catalyses The enzyme shows specific recognition of a C-terminal tripeptide, Xaa-Yaa-Zaa, in which Xaa is preferably Ala or Leu, Yaa is preferably Ala or Tyr, and Zaa is preferably Ala, but then cleaves at a variable distance from the C-terminus. A typical cleavage is -Ala-Ala-|-Arg-Ala-Ala-Lys-Glu-Asn-Tyr-Ala-Leu-Ala-Ala.. Protease involved in the C-terminal processing of the chloroplastic D1 protein of photosystem II. This proteolytic processing is necessary to allow the light-driven assembly of the tetranuclear manganese cluster, which is responsible for photosynthetic water oxidation. The protein is Carboxyl-terminal-processing peptidase 3, chloroplastic (CTPA3) of Arabidopsis thaliana (Mouse-ear cress).